A 305-amino-acid chain; its full sequence is Taste receptor type 2 member 13 (305 aa).

The Extracellular portion of the chain corresponds to methionine 1–aspartate 7. Residues isoleucine 8 to valine 28 traverse the membrane as a helical segment. The Cytoplasmic portion of the chain corresponds to leucine 29–serine 42. The chain crosses the membrane as a helical span at residues phenylalanine 43–leucine 63. Over leucine 64–threonine 88 the chain is Extracellular. A helical membrane pass occupies residues tryptophan 89–leucine 109. The Cytoplasmic segment spans residues lysine 110–lysine 128. A helical transmembrane segment spans residues valine 129 to asparagine 149. Over threonine 150–glutamate 182 the chain is Extracellular. N-linked (GlcNAc...) asparagine glycosylation occurs at asparagine 162. The helical transmembrane segment at methionine 183–phenylalanine 203 threads the bilayer. The Cytoplasmic portion of the chain corresponds to serine 204–arginine 232. The chain crosses the membrane as a helical span at residues isoleucine 233–isoleucine 253. Over proline 254–aspartate 262 the chain is Extracellular. A helical transmembrane segment spans residues leucine 263–leucine 283. Over glycine 284–aspartate 305 the chain is Cytoplasmic.

The protein belongs to the G-protein coupled receptor T2R family. As to expression, expressed in subsets of taste receptor cells of the tongue and palate epithelium and exclusively in gustducin-positive cells. Expressed in 15% taste bud cells in circumvallate and foliate papillae but only in 2% in fungiform papillae. Expressed in the duodenum, antrum and fundus (part of the stomach).

The protein resides in the membrane. Its function is as follows. Receptor that may play a role in the perception of bitterness and is gustducin-linked. May play a role in sensing the chemical composition of the gastrointestinal content. The activity of this receptor may stimulate alpha gustducin, mediate PLC-beta-2 activation and lead to the gating of TRPM5. This is Taste receptor type 2 member 13 (Tas2r13) from Rattus norvegicus (Rat).